The primary structure comprises 147 residues: MTSSLKIWGILLALLCILCRLCVYSNNIYWREFIKLHYLSPSREFKEYKCDVLMREKEALKGKSFHMFIYSLWFKIQRACINEKGSDRYRNAYVWAPGALKVLECHWEKYNNRYTESRSFSYIEFHCGVDGYVDNIEDLRIIEPISN.

A signal peptide spans 1 to 25; sequence MTSSLKIWGILLALLCILCRLCVYS.

Epididymis, with predominant expression in the corpus region. Moderately expressed in the vas deferens; only low levels are detectable in the caput and cauda regions.

Its subcellular location is the secreted. Functionally, possible function in sperm maturation. This chain is Epididymal secretory protein E3-alpha (EDDM3A), found in Homo sapiens (Human).